The primary structure comprises 400 residues: Forkhead box protein A4-B (400 aa).

Residues 119-213 (KPPYSYISLI…ENGCYLRRQK (95 aa)) constitute a DNA-binding region (fork-head). Over residues 218–234 (ERSKSGEGERKGNKPGD) the composition is skewed to basic and acidic residues. The tract at residues 218-290 (ERSKSGEGER…VGFSPTSEQA (73 aa)) is disordered. Composition is skewed to polar residues over residues 249 to 258 (DCSSSRSPQA) and 267 to 277 (STGSSIHQATG).

In terms of tissue distribution, primarily expressed in the dorsal blastopore lip (Spemann organizer) of early gastrulae. At later stages, expressed in the dorsal mesoderm and the neural floor plate. In the dorsal mesoderm, expressed in the notochord but not in the presomitic mesoderm. Also expressed in the mid-brain area.

It localises to the nucleus. Transcriptional repressor involved in embryonic nervous system development. Plays a role in the induction and patterning of the anterior-posterior neural axis. Involved in the establishment of floor plate differentiation from neural plate cells during gastrulation. Binds the anf1 promoter sequence to restrict expression of anf1 to the anterior of the neural plate, thereby patterning the forebrain. Can bind to the HNF-3-alpha DNA target sequence. Cooperates with t/bra in a dose-dependent manner to specify dorsal mesoderm formation, including notochord. May be involved in the dorso-ventral patterning of the mesoderm. Binds to DNA via the target sequence 5'-[GA]TAAA[TC]A-3', with 5'-GTAAATA-3' being the preferred binding site. This is Forkhead box protein A4-B (foxa4-b) from Xenopus laevis (African clawed frog).